The primary structure comprises 64 residues: MARAKGVRILVTLECTECRSNGERLGGGVSRYATKKNRRNTPNRLELNKFCPYCKKHVLHREIK.

Belongs to the bacterial ribosomal protein bL33 family.

It is found in the plastid. The protein resides in the cyanelle. The sequence is that of Large ribosomal subunit protein bL33c (rpl33) from Cyanophora paradoxa.